We begin with the raw amino-acid sequence, 689 residues long: Methionine--tRNA ligase (689 aa).

The 'HIGH' region signature appears at 13–23 (PYANGNFHIGH). Residues Cys-144, Cys-147, Cys-157, and Cys-160 each contribute to the Zn(2+) site. Positions 341–345 (KMSKS) match the 'KMSKS' region motif. Lys-344 contacts ATP. Residues 583 to 689 (DFAKVDLRIA…PGASPGLRVR (107 aa)) form the tRNA-binding domain.

It belongs to the class-I aminoacyl-tRNA synthetase family. MetG type 1 subfamily. As to quaternary structure, homodimer. The cofactor is Zn(2+).

The protein localises to the cytoplasm. It catalyses the reaction tRNA(Met) + L-methionine + ATP = L-methionyl-tRNA(Met) + AMP + diphosphate. Functionally, is required not only for elongation of protein synthesis but also for the initiation of all mRNA translation through initiator tRNA(fMet) aminoacylation. The polypeptide is Methionine--tRNA ligase (Polaromonas sp. (strain JS666 / ATCC BAA-500)).